A 93-amino-acid polypeptide reads, in one-letter code: Alpha-defensin 26 (93 aa).

The first 19 residues, 1–19, serve as a signal peptide directing secretion; sequence MKTLVLLSALFLLAFQVQA. The propeptide occupies 20–58; that stretch reads DPIQNTDEETNTEVQPQEEDQAVSVSFGNPEGSDLQEES. Residues 24 to 55 form a disordered region; the sequence is NTDEETNTEVQPQEEDQAVSVSFGNPEGSDLQ. Acidic residues predominate over residues 25–40; that stretch reads TDEETNTEVQPQEEDQ. Intrachain disulfides connect Cys-64/Cys-92, Cys-66/Cys-81, and Cys-71/Cys-91.

The protein belongs to the alpha-defensin family.

Its subcellular location is the secreted. Functionally, may have microbicidal activities. In Mus musculus (Mouse), this protein is Alpha-defensin 26 (Defa26).